The following is a 320-amino-acid chain: Malate dehydrogenase (320 aa).

NAD(+)-binding positions include 10-15 (GAGQIG) and D34. The substrate site is built by R83 and R89. NAD(+) is bound by residues N96 and 119 to 121 (ITN). 2 residues coordinate substrate: N121 and R152. H176 functions as the Proton acceptor in the catalytic mechanism.

It belongs to the LDH/MDH superfamily. MDH type 3 family.

The catalysed reaction is (S)-malate + NAD(+) = oxaloacetate + NADH + H(+). In terms of biological role, catalyzes the reversible oxidation of malate to oxaloacetate. This chain is Malate dehydrogenase, found in Roseobacter denitrificans (strain ATCC 33942 / OCh 114) (Erythrobacter sp. (strain OCh 114)).